The primary structure comprises 167 residues: Protein FAM163B (167 aa).

A helical membrane pass occupies residues 6–26 (VVITGGILATVILLCIIAVLC). Residue Ser40 is modified to Phosphoserine.

Belongs to the FAM163 family.

It is found in the membrane. The protein is Protein FAM163B (Fam163b) of Mus musculus (Mouse).